The chain runs to 246 residues: Putative carbonic anhydrase 3 (246 aa).

One can recognise an Alpha-carbonic anhydrase domain in the interval 3–244 (GHWSYCDDDE…LNDRKIVHIV (242 aa)). The Proton acceptor role is filled by His-61. His-91, His-93, and His-116 together coordinate Zn(2+). 187-188 (TT) contributes to the substrate binding site.

It belongs to the alpha-carbonic anhydrase family. It depends on Zn(2+) as a cofactor.

It carries out the reaction hydrogencarbonate + H(+) = CO2 + H2O. Reversible hydration of carbon dioxide. This is Putative carbonic anhydrase 3 (cah-3) from Caenorhabditis elegans.